Reading from the N-terminus, the 481-residue chain is Aspartyl/glutamyl-tRNA(Asn/Gln) amidotransferase subunit B (481 aa).

It belongs to the GatB/GatE family. GatB subfamily. In terms of assembly, heterotrimer of A, B and C subunits.

It carries out the reaction L-glutamyl-tRNA(Gln) + L-glutamine + ATP + H2O = L-glutaminyl-tRNA(Gln) + L-glutamate + ADP + phosphate + H(+). It catalyses the reaction L-aspartyl-tRNA(Asn) + L-glutamine + ATP + H2O = L-asparaginyl-tRNA(Asn) + L-glutamate + ADP + phosphate + 2 H(+). In terms of biological role, allows the formation of correctly charged Asn-tRNA(Asn) or Gln-tRNA(Gln) through the transamidation of misacylated Asp-tRNA(Asn) or Glu-tRNA(Gln) in organisms which lack either or both of asparaginyl-tRNA or glutaminyl-tRNA synthetases. The reaction takes place in the presence of glutamine and ATP through an activated phospho-Asp-tRNA(Asn) or phospho-Glu-tRNA(Gln). The chain is Aspartyl/glutamyl-tRNA(Asn/Gln) amidotransferase subunit B from Teredinibacter turnerae (strain ATCC 39867 / T7901).